Consider the following 502-residue polypeptide: High affinity nitrate transporter 2.5 (502 aa).

12 consecutive transmembrane segments (helical) span residues 51–71, 87–107, 111–131, 133–153, 172–192, 208–228, 264–284, 300–320, 334–354, 361–381, 393–413, and 423–443; these read WFQF…LPVI, IASV…CDLF, LASA…AGIK, PIGF…FVST, IAAG…PIVF, IAFF…LLFG, WITA…DNII, GIIA…GGIF, LWAW…LGQI, IIVM…TFGV, VSGM…LIFF, and GITL…LIYF. Residues 477–502 form a disordered region; sequence LHIGSQKFAETSISERGRATTTHPQT.

This sequence belongs to the major facilitator superfamily. Nitrate/nitrite porter (TC 2.A.1.8) family. In terms of assembly, oligomeric molecular complex with NRT3.1. Expressed in roots, shoots and seeds. Expressed in leaves. Expressed in root hair zone of the primary root and the lateral roots, but not in the lateral root tip or in older parts of the roots. Detected mainly in the epidermis and the cortex. Expressed in shoots only in higher-order veins.

The protein resides in the cell membrane. Nitrate transporter involved in the constitutive high-affinity transport system (cHATS) under long-term N starvation conditions. Predominantly expressed in roots of nitrate-deprived plants as a 150 kDa molecular complex with NRT3.1 representing the major contributor to cHATS influx. The principal role of this cHATS is to enable roots previously deprived of nitrate to absorb this ion and initiate induction of nitrate-inducible genes. Not involved in transfer of nitrate from roots to shoots. Contributes to phloem loading of nitrate in shoots during N starvation, but not required for growth and nitrate uptake in young plants. Required for the nitrate uptake-independent plant growth promotion and lateral root response to the rhizospheric Phyllobacterium. Might be involved in the transfer of nitrate from stored pools to cytoplasm. The sequence is that of High affinity nitrate transporter 2.5 (NRT2.5) from Arabidopsis thaliana (Mouse-ear cress).